The following is a 255-amino-acid chain: Protein NEN4 (255 aa).

The 164-residue stretch at 11 to 174 folds into the Exonuclease domain; that stretch reads VFFDLETNVP…DDVRMNLEVL (164 aa). Mg(2+)-binding residues include Asp-14 and Glu-16. His-161 (proton donor/acceptor) is an active-site residue. Residue Asp-166 participates in Mg(2+) binding.

Mg(2+) is required as a cofactor. Expressed in the sieve elements and phloem pole pericycle cells.

Its subcellular location is the nucleus. Functionally, probable exonuclease required for enuclation of sieve elements. In Arabidopsis thaliana (Mouse-ear cress), this protein is Protein NEN4.